We begin with the raw amino-acid sequence, 443 residues long: Tol-Pal system protein TolB (443 aa).

The first 24 residues, 1-24, serve as a signal peptide directing secretion; it reads MSFQIRVFTAILAVLSLFTAPVLA. Residues 424 to 443 are disordered; the sequence is LRPVRTPEGGSDPSWSPLQR.

This sequence belongs to the TolB family. In terms of assembly, the Tol-Pal system is composed of five core proteins: the inner membrane proteins TolA, TolQ and TolR, the periplasmic protein TolB and the outer membrane protein Pal. They form a network linking the inner and outer membranes and the peptidoglycan layer.

It is found in the periplasm. Functionally, part of the Tol-Pal system, which plays a role in outer membrane invagination during cell division and is important for maintaining outer membrane integrity. This chain is Tol-Pal system protein TolB, found in Roseobacter denitrificans (strain ATCC 33942 / OCh 114) (Erythrobacter sp. (strain OCh 114)).